Consider the following 205-residue polypeptide: Recombination protein RecR (205 aa).

Residues Cys-64–Cys-79 form a C4-type zinc finger. Residues Thr-87–Pro-182 form the Toprim domain.

It belongs to the RecR family.

Functionally, may play a role in DNA repair. It seems to be involved in an RecBC-independent recombinational process of DNA repair. It may act with RecF and RecO. The sequence is that of Recombination protein RecR from Chloroflexus aggregans (strain MD-66 / DSM 9485).